A 379-amino-acid chain; its full sequence is Alanine racemase (379 aa).

The active-site Proton acceptor; specific for D-alanine is K40. K40 bears the N6-(pyridoxal phosphate)lysine mark. Residue R138 participates in substrate binding. Catalysis depends on Y267, which acts as the Proton acceptor; specific for L-alanine. Position 315 (M315) interacts with substrate.

It belongs to the alanine racemase family. Pyridoxal 5'-phosphate serves as cofactor.

It catalyses the reaction L-alanine = D-alanine. It participates in amino-acid biosynthesis; D-alanine biosynthesis; D-alanine from L-alanine: step 1/1. Catalyzes the interconversion of L-alanine and D-alanine. May also act on other amino acids. In Halothermothrix orenii (strain H 168 / OCM 544 / DSM 9562), this protein is Alanine racemase (alr).